Here is a 437-residue protein sequence, read N- to C-terminus: Probable receptor-like serine/threonine-protein kinase At4g34500 (437 aa).

A helical transmembrane segment spans residues 25–45; the sequence is LVIAICSVFILLISLLIFLFV. Residues 145–426 form the Protein kinase domain; that stretch reads FSDDNMIGEG…MLEAEDFPFR (282 aa). Residues 151-159 and K173 contribute to the ATP site; that span reads IGEGGYGVV. Y220 is modified (phosphotyrosine). D273 functions as the Proton acceptor in the catalytic mechanism. S277 is subject to Phosphoserine. 2 positions are modified to phosphothreonine: T307 and T312. Y320 is modified (phosphotyrosine).

The protein belongs to the protein kinase superfamily. Ser/Thr protein kinase family.

It localises to the cell membrane. The catalysed reaction is L-seryl-[protein] + ATP = O-phospho-L-seryl-[protein] + ADP + H(+). The enzyme catalyses L-threonyl-[protein] + ATP = O-phospho-L-threonyl-[protein] + ADP + H(+). The protein is Probable receptor-like serine/threonine-protein kinase At4g34500 of Arabidopsis thaliana (Mouse-ear cress).